Reading from the N-terminus, the 875-residue chain is Cell surface glycoprotein (875 aa).

The N-terminal stretch at 1 to 23 is a signal peptide; the sequence is MTNTKQKINAVFLSALMVMSVFA. Residues 137–157 show a composition bias toward polar residues; it reads EVQNGGSGDVTGSTLQTSSSG. Disordered regions lie at residues 137-158 and 197-217; these read EVQN…SSGP and LPTA…DFDV. The span at 205–216 shows a compositional bias: low complexity; the sequence is DNGASGSNGDFD. N253 carries N-linked (GlcNAc...) asparagine glycosylation. A disordered region spans residues 380 to 414; sequence YPASDSSNDGYASGGSHASSVTVRDTDGDGTDDSE. Residues 383–402 are compositionally biased toward polar residues; sequence SDSSNDGYASGGSHASSVTV. N455, N563, N715, and N774 each carry an N-linked (GlcNAc...) asparagine glycan. The segment at 794–852 is disordered; sequence EAGSLEEEQPDTETPEPDTETPEPDTETPEPDTETPEPDTETPEPDTETEEATTEASGP. A compositionally biased stretch (acidic residues) spans 797-846; that stretch reads SLEEEQPDTETPEPDTETPEPDTETPEPDTETPEPDTETPEPDTETEEAT. A helical transmembrane segment spans residues 851-875; that stretch reads GPGFTAAIALIALVAAALLAVRRDN. Residues 852 to 854 carry the PGF sorting signal motif; the sequence is PGF.

This sequence belongs to the halobacterial S-layer protein family. In terms of processing, asn-455 is glycosylated by a pentasaccharide comprising a hexose, 2 hexuronic acids, a methyl ester of a hexuronic acid and a final hexose. The complete pentasaccharide is first assembled on dolichol phosphate and then transferred the glycan to the target Asn. Cleaved by the archaeosortase ArtA at the C-terminus, with removal of a short hydrophobic segment. Post-translationally, lipidation.

The protein localises to the secreted. Its subcellular location is the cell wall. It is found in the S-layer. It localises to the cell membrane. Its function is as follows. S-layer protein. The S-layer is a paracrystalline mono-layered assembly of proteins which coat the surface of the cell. This chain is Cell surface glycoprotein (csg1), found in Haloarcula marismortui (strain ATCC 43049 / DSM 3752 / JCM 8966 / VKM B-1809) (Halobacterium marismortui).